The chain runs to 446 residues: C4-dicarboxylate transport protein 2 (446 aa).

Transmembrane regions (helical) follow at residues 7-26, 46-64, 77-99, 152-171, 192-211, 221-243, 291-313, 318-340, 353-375, and 381-403; these read PLFG…GIWA, MLIA…CGAG, VIYF…YAFG, ILQV…LLGE, AVVI…FTVG, LGFL…LGGI, VVGL…YLTL, IAQA…VALI, IVIL…VLVL, and IGIA…IAAW.

It belongs to the dicarboxylate/amino acid:cation symporter (DAACS) (TC 2.A.23) family.

It is found in the cell inner membrane. Responsible for the transport of dicarboxylates such as succinate, fumarate, and malate from the periplasm across the membrane. The sequence is that of C4-dicarboxylate transport protein 2 (dctA2) from Ralstonia nicotianae (strain ATCC BAA-1114 / GMI1000) (Ralstonia solanacearum).